Consider the following 153-residue polypeptide: Endoribonuclease YbeY (153 aa).

The Zn(2+) site is built by histidine 114, histidine 118, and histidine 124.

Belongs to the endoribonuclease YbeY family. Requires Zn(2+) as cofactor.

It is found in the cytoplasm. Single strand-specific metallo-endoribonuclease involved in late-stage 70S ribosome quality control and in maturation of the 3' terminus of the 16S rRNA. The protein is Endoribonuclease YbeY of Shewanella baltica (strain OS185).